Reading from the N-terminus, the 720-residue chain is Probable ATP-dependent RNA helicase DHX35 (720 aa).

The Helicase ATP-binding domain occupies 64-229; sequence LYLIENYQTV…FNQNETSDPA (166 aa). An ATP-binding site is contributed by 77–84; that stretch reads GETGCGKS. The DEAH box motif lies at 176-179; sequence DEAH. Positions 261 to 438 constitute a Helicase C-terminal domain; the sequence is TVETVVKIHQ…PVILQLKALG (178 aa).

Belongs to the DEAD box helicase family. DEAH subfamily. In terms of assembly, identified in the spliceosome C complex.

The enzyme catalyses ATP + H2O = ADP + phosphate + H(+). May be involved in pre-mRNA splicing. In Pongo abelii (Sumatran orangutan), this protein is Probable ATP-dependent RNA helicase DHX35 (DHX35).